The sequence spans 1495 residues: Collagen alpha-1(XVII) chain (1495 aa).

The span at Met1–Glu17 shows a compositional bias: basic and acidic residues. A disordered region spans residues Met1–Gly138. Topologically, residues Met1 to Trp435 are cytoplasmic. Residues Met1–Arg535 are nonhelical region (NC16). A compositionally biased stretch (polar residues) spans Gln19–Thr32. Over residues Ser51–Gly63 the composition is skewed to low complexity. Polar residues-rich tracts occupy residues Tyr64–Ser80 and Glu95–Pro104. The chain crosses the membrane as a helical; Signal-anchor for type II membrane protein span at residues Leu436–Leu456. The Extracellular portion of the chain corresponds to Ala457–Val1495. Disordered regions lie at residues Arg532–Ser824, Asp847–Gln999, Glu1160–Ile1185, Ser1201–Leu1226, Arg1251–Gly1278, Gly1295–Gly1336, and Met1396–Ser1416. The triple-helical region stretch occupies residues Gly536 to Gln1482. Composition is skewed to low complexity over residues Pro702 to Ala711 and Arg761 to Lys773. Residues Pro786–Val807 are compositionally biased toward pro residues. Over residues Pro809–Pro818 the composition is skewed to low complexity. 7 stretches are compositionally biased toward pro residues: residues Pro871–Arg886, Pro901–Pro910, Pro946–Pro955, Pro981–Pro993, Pro1167–Ile1179, Pro1208–Pro1218, and Pro1257–Pro1269. Gly residues predominate over residues Gly1296–Leu1308. Positions Gly1309–Gly1336 are enriched in low complexity. Pro residues predominate over residues Pro1403 to Pro1413. N-linked (GlcNAc...) asparagine glycosylation is present at Asn1424. The disordered stretch occupies residues Thr1435 to Val1495. Residues Pro1472–Glu1481 show a composition bias toward basic and acidic residues. The nonhelical region (NC1) stretch occupies residues Met1483–Val1495. The segment covering Gly1486–Val1495 has biased composition (basic residues).

As to quaternary structure, homotrimers of alpha 1(XVII)chains. In terms of processing, the intracellular/endo domain is disulfide-linked. Post-translationally, prolines at the third position of the tripeptide repeating unit (G-X-Y) are hydroxylated in some or all of the chains. The ectodomain is shedded from the surface of keratinocytes resulting in a 120-kDa soluble form, also named as 120 kDa linear IgA disease antigen homolog. The shedding is mediated by membrane-bound metalloproteases. Cornea specific.

It localises to the cell junction. The protein resides in the hemidesmosome. Its subcellular location is the membrane. The protein localises to the secreted. It is found in the extracellular space. It localises to the extracellular matrix. The protein resides in the basement membrane. In terms of biological role, may play a role in the integrity of hemidesmosome and the attachment of basal keratinocytes to the underlying basement membrane. The 120 kDa linear IgA disease antigen homolog is an anchoring filament component involved in dermal-epidermal cohesion. In Gallus gallus (Chicken), this protein is Collagen alpha-1(XVII) chain (COL17A1).